We begin with the raw amino-acid sequence, 441 residues long: Ribosomal protein uS12 methylthiotransferase RimO (441 aa).

Residues 7 to 117 enclose the MTTase N-terminal domain; that stretch reads PKISFVSLGC…VLEAVHRALP (111 aa). 6 residues coordinate [4Fe-4S] cluster: cysteine 16, cysteine 52, cysteine 81, cysteine 148, cysteine 152, and cysteine 155. Residues 134 to 371 enclose the Radical SAM core domain; it reads LTPRHYAYLK…MARQQKISAR (238 aa). One can recognise a TRAM domain in the interval 374–440; it reads KRKVGTRQQV…AYDLHGTVAG (67 aa).

The protein belongs to the methylthiotransferase family. RimO subfamily. It depends on [4Fe-4S] cluster as a cofactor.

Its subcellular location is the cytoplasm. It catalyses the reaction L-aspartate(89)-[ribosomal protein uS12]-hydrogen + (sulfur carrier)-SH + AH2 + 2 S-adenosyl-L-methionine = 3-methylsulfanyl-L-aspartate(89)-[ribosomal protein uS12]-hydrogen + (sulfur carrier)-H + 5'-deoxyadenosine + L-methionine + A + S-adenosyl-L-homocysteine + 2 H(+). Functionally, catalyzes the methylthiolation of an aspartic acid residue of ribosomal protein uS12. The protein is Ribosomal protein uS12 methylthiotransferase RimO of Rhodopseudomonas palustris (strain BisA53).